The following is a 212-amino-acid chain: MSEAAPAAPAAAPPAEKAPAKKKAAKKPAGVRRKASGPPVSELITKAVAASKERSGVSLAALKKALAAAGYDVEKNNSRIKLGLKSLVSKGILVQTKGTGASGSFKLNKKAASGEAKPQAKKAGAAKAKKPAGAAKKPKKATGAATPKKAAKKTPKKAKKPAAAAVTKKVAKSPKKAKVTKPKKVKSASKAVKPKAAKPKVAKAKKVAAKKK.

The segment covering 1-17 (MSEAAPAAPAAAPPAEK) has biased composition (low complexity). The tract at residues 1-41 (MSEAAPAAPAAAPPAEKAPAKKKAAKKPAGVRRKASGPPVS) is disordered. Ser-2 bears the N-acetylserine mark. Residue Ser-2 is modified to Phosphoserine. The residue at position 17 (Lys-17) is an N6-acetyllysine. Residues 20–35 (AKKKAAKKPAGVRRKA) show a composition bias toward basic residues. An N6-(2-hydroxyisobutyryl)lysine mark is found at Lys-23, Lys-26, and Lys-27. An N6-(beta-hydroxybutyryl)lysine; alternate modification is found at Lys-34. Lys-34 carries the post-translational modification N6-crotonyllysine; alternate. Lys-34 carries the post-translational modification N6-methyllysine; alternate. Residues 36–109 (SGPPVSELIT…GASGSFKLNK (74 aa)) enclose the H15 domain. Lys-46 is subject to N6-(2-hydroxyisobutyryl)lysine. Lys-52 carries the N6-(beta-hydroxybutyryl)lysine; alternate modification. Residue Lys-52 is modified to N6-(2-hydroxyisobutyryl)lysine; alternate. The residue at position 54 (Arg-54) is a Citrulline. Lys-63 is modified (N6-(2-hydroxyisobutyryl)lysine). Lys-64 is modified (N6-(beta-hydroxybutyryl)lysine; alternate). Position 64 is an N6-crotonyllysine; alternate (Lys-64). At Lys-64 the chain carries N6-(2-hydroxyisobutyryl)lysine; alternate. N6-(2-hydroxyisobutyryl)lysine occurs at positions 75 and 81. Residues Lys-85 and Lys-90 each carry the N6-(beta-hydroxybutyryl)lysine; alternate modification. Lys-85, Lys-90, and Lys-97 each carry N6-crotonyllysine; alternate. N6-(2-hydroxyisobutyryl)lysine; alternate occurs at positions 85, 90, and 97. Lys-97 carries the post-translational modification N6-succinyllysine; alternate. The segment at 98–212 (GTGASGSFKL…KAKKVAAKKK (115 aa)) is disordered. Position 104 is a phosphoserine; by PKC (Ser-104). An N6-(beta-hydroxybutyryl)lysine modification is found at Lys-106. N6-(2-hydroxyisobutyryl)lysine is present on residues Lys-110, Lys-117, Lys-121, Lys-129, and Lys-136. Residues 121-148 (KKAGAAKAKKPAGAAKKPKKATGAATPK) are compositionally biased toward low complexity. Residue Thr-146 is modified to Phosphothreonine. Residue Lys-148 is modified to N6-(2-hydroxyisobutyryl)lysine. Residues 149-160 (KAAKKTPKKAKK) show a composition bias toward basic residues. N6-crotonyllysine; alternate occurs at positions 159 and 168. An N6-(2-hydroxyisobutyryl)lysine; alternate mark is found at Lys-159 and Lys-168. Over residues 169 to 212 (KVAKSPKKAKVTKPKKVKSASKAVKPKAAKPKVAKAKKVAAKKK) the composition is skewed to basic residues. At Lys-186 the chain carries N6-methyllysine; by EHMT1 and EHMT2. The residue at position 187 (Ser-187) is an ADP-ribosylserine. Position 212 is an N6-(2-hydroxyisobutyryl)lysine (Lys-212).

It belongs to the histone H1/H5 family. Interacts with TSC22D1 isoform 2. In terms of processing, H1 histones are progressively phosphorylated during the cell cycle, becoming maximally phosphorylated during late G2 phase and M phase, and being dephosphorylated sharply thereafter. Crotonylation (Kcr) is specifically present in male germ cells and marks testis-specific genes in post-meiotic cells, including X-linked genes that escape sex chromosome inactivation in haploid cells. Crotonylation marks active promoters and enhancers and confers resistance to transcriptional repressors. It is also associated with post-meiotically activated genes on autosomes. Post-translationally, ADP-ribosylated on Ser-187 in response to DNA damage. In terms of processing, citrullination at Arg-54 (H1R54ci) by PADI4 takes place within the DNA-binding site of H1 and results in its displacement from chromatin and global chromatin decondensation, thereby promoting pluripotency and stem cell maintenance. Hydroxybutyrylation of histones is induced by starvation.

It localises to the nucleus. The protein resides in the chromosome. Functionally, histone H1 protein binds to linker DNA between nucleosomes forming the macromolecular structure known as the chromatin fiber. Histones H1 are necessary for the condensation of nucleosome chains into higher-order structured fibers. Also acts as a regulator of individual gene transcription through chromatin remodeling, nucleosome spacing and DNA methylation. This chain is Histone H1.2, found in Mus musculus (Mouse).